The following is a 258-amino-acid chain: UPF0246 protein Pnuc_0753 (258 aa).

Belongs to the UPF0246 family.

This chain is UPF0246 protein Pnuc_0753, found in Polynucleobacter asymbioticus (strain DSM 18221 / CIP 109841 / QLW-P1DMWA-1) (Polynucleobacter necessarius subsp. asymbioticus).